A 132-amino-acid chain; its full sequence is Fatty acid-binding protein, intestinal (132 aa).

The residue at position 2 (A2) is an N-acetylalanine. Hexadecanoate contacts are provided by W83 and R107. 2 residues coordinate tetradecanoate: W83 and R107.

Belongs to the calycin superfamily. Fatty-acid binding protein (FABP) family. As to expression, expressed in the small intestine. Highest expression levels in the proximal ileum.

The protein localises to the cytoplasm. Its function is as follows. FABPs are thought to play a role in the intracellular transport of long-chain fatty acids and their acyl-CoA esters. FABP2 is probably involved in triglyceride-rich lipoprotein synthesis. Binds saturated long-chain fatty acids with a high affinity, but binds with a lower affinity to unsaturated long-chain fatty acids. FABP2 may also help maintain energy homeostasis by functioning as a lipid sensor. This Mus musculus (Mouse) protein is Fatty acid-binding protein, intestinal (Fabp2).